The sequence spans 200 residues: Methylthioribulose-1-phosphate dehydratase (200 aa).

2 residues coordinate Zn(2+): H90 and H92.

Belongs to the aldolase class II family. MtnB subfamily. The cofactor is Zn(2+).

The catalysed reaction is 5-(methylsulfanyl)-D-ribulose 1-phosphate = 5-methylsulfanyl-2,3-dioxopentyl phosphate + H2O. It participates in amino-acid biosynthesis; L-methionine biosynthesis via salvage pathway; L-methionine from S-methyl-5-thio-alpha-D-ribose 1-phosphate: step 2/6. Catalyzes the dehydration of methylthioribulose-1-phosphate (MTRu-1-P) into 2,3-diketo-5-methylthiopentyl-1-phosphate (DK-MTP-1-P). This is Methylthioribulose-1-phosphate dehydratase from Sodalis glossinidius (strain morsitans).